Reading from the N-terminus, the 282-residue chain is UDP-3-O-acyl-N-acetylglucosamine deacetylase (282 aa).

Residues His-80, His-240, and Asp-244 each coordinate Zn(2+). The active-site Proton donor is His-267.

Belongs to the LpxC family. The cofactor is Zn(2+).

It localises to the plastid. Its subcellular location is the chloroplast. It carries out the reaction a UDP-3-O-[(3R)-3-hydroxyacyl]-N-acetyl-alpha-D-glucosamine + H2O = a UDP-3-O-[(3R)-3-hydroxyacyl]-alpha-D-glucosamine + acetate. Its pathway is glycolipid biosynthesis; lipid IV(A) biosynthesis; lipid IV(A) from (3R)-3-hydroxytetradecanoyl-[acyl-carrier-protein] and UDP-N-acetyl-alpha-D-glucosamine: step 2/6. Its function is as follows. Catalyzes the hydrolysis of UDP-3-O-myristoyl-N-acetylglucosamine to form UDP-3-O-myristoylglucosamine and acetate. Involved in the biosynthesis of lipid A, a phosphorylated glycolipid that in bacteria anchors the lipopolysaccharide to the outer membrane of the cell. The target for the lipopolysaccharides produced in the chloroplast could either be the cell envelope of the eukaryote or the plastid membrane. In Cyanidium caldarium (Red alga), this protein is UDP-3-O-acyl-N-acetylglucosamine deacetylase.